The following is a 717-amino-acid chain: DNA ligase (717 aa).

NAD(+)-binding positions include 44–48 (DADYD), 93–94 (SL), and E127. The N6-AMP-lysine intermediate role is filled by K129. Positions 150, 186, 302, and 326 each coordinate NAD(+). Residues C431, C434, C455, and C461 each contribute to the Zn(2+) site. In terms of domain architecture, BRCT spans 639 to 717 (ATDSPVAGKT…EDEWLALIGG (79 aa)).

It belongs to the NAD-dependent DNA ligase family. LigA subfamily. Mg(2+) serves as cofactor. The cofactor is Mn(2+).

It carries out the reaction NAD(+) + (deoxyribonucleotide)n-3'-hydroxyl + 5'-phospho-(deoxyribonucleotide)m = (deoxyribonucleotide)n+m + AMP + beta-nicotinamide D-nucleotide.. In terms of biological role, DNA ligase that catalyzes the formation of phosphodiester linkages between 5'-phosphoryl and 3'-hydroxyl groups in double-stranded DNA using NAD as a coenzyme and as the energy source for the reaction. It is essential for DNA replication and repair of damaged DNA. The polypeptide is DNA ligase (Rhizobium meliloti (strain 1021) (Ensifer meliloti)).